We begin with the raw amino-acid sequence, 287 residues long: mRNA-capping enzyme regulatory subunit (287 aa).

The protein belongs to the chordopoxvirinae mRNA-capping enzyme regulatory subunit family. Heterodimer of a catalytic and a regulatory subunit. Intrinsic methyltransferase activity of the catalytic subunit is weak and needs to be stimulated 30- to 50-fold by the regulatory subunit, which is itself catalytically inert.

The protein resides in the virion. Regulatory subunit of the mRNA cap enzyme which stabilizes the catalytic subunit and enhances its methyltransferase activity through an allosteric mechanism. Heterodimeric mRNA capping enzyme catalyzes the linkage of a N7-methyl-guanosine moiety to the first transcribed nucleotide (cap 0 structure), whereas the polymerase associated VP39 is responsible for a second methylation at the 2'-O position of the ribose (cap 1 structure). Functionally, the heterodimeric enzyme is also involved in early viral gene transcription termination and intermediate viral gene transcription initiation. Early gene transcription termination requires the termination factor VTF, the DNA-dependent ATPase NPH-I and the Rap94 subunit of the viral RNA polymerase, as well as the presence of a specific termination motif. Binds, together with RAP94, to the termination motif 5'-UUUUUNU-3' in the nascent early mRNA. This is mRNA-capping enzyme regulatory subunit from Vaccinia virus (strain Ankara) (VACV).